The primary structure comprises 152 residues: MAARLCCYLDPERDVLCLRPLQAEPSGRPFSGLSRPAETAAAAAVPAFHGAHLSLRGLPSCAFSSAGPCALRFTSATWRCMETPMNSVTCLRKRTLGLRTAPPTVMEQYIKDCLFEQWEEQGEEPRLKVFVLGGCRHKLVGTASPCIFFTSA.

The mitochondrial targeting sequence stretch occupies residues 68–115; the sequence is PCALRFTSATWRCMETPMNSVTCLRKRTLGLRTAPPTVMEQYIKDCLF.

This sequence belongs to the orthohepadnavirus protein X family. May form homodimer. May interact with host CEBPA, CFLAR, CREB1, DDB1, E4F1, HBXIP, HSPD1/HSP60, NFKBIA, POLR2E and SMAD4. Interacts with host SMC5-SMC6 complex and induces its degradation. Interacts with host TRPC4AP; leading to prevent ubiquitination of TRPC4AP. Interacts with host PLSCR1; this interaction promotes ubiquitination and degradation of HBx and impairs HBx-mediated cell proliferation. Post-translationally, a fraction may be phosphorylated in insect cells and HepG2 cells, a human hepatoblastoma cell line. Phosphorylated in vitro by host protein kinase C or mitogen-activated protein kinase. N-acetylated in insect cells.

The protein localises to the host cytoplasm. The protein resides in the host nucleus. It localises to the host mitochondrion. Functionally, multifunctional protein that plays a role in silencing host antiviral defenses and promoting viral transcription. Does not seem to be essential for HBV infection. May be directly involved in development of cirrhosis and liver cancer (hepatocellular carcinoma). Most of cytosolic activities involve modulation of cytosolic calcium. The effect on apoptosis is controversial depending on the cell types in which the studies have been conducted. May induce apoptosis by localizing in mitochondria and causing loss of mitochondrial membrane potential. May also modulate apoptosis by binding host CFLAR, a key regulator of the death-inducing signaling complex (DISC). Promotes viral transcription by using the host E3 ubiquitin ligase DDB1 to target the SMC5-SMC6 complex to proteasomal degradation. This host complex would otherwise bind to viral episomal DNA, and prevents its transcription. Moderately stimulates transcription of many different viral and cellular transcription elements. Promoters and enhancers stimulated by HBx contain DNA binding sites for NF-kappa-B, AP-1, AP-2, c-EBP, ATF/CREB, or the calcium-activated factor NF-AT. The protein is Protein X of Lagothrix lagotricha (Brown woolly monkey).